Reading from the N-terminus, the 226-residue chain is DNA mismatch repair protein MutH (226 aa).

Belongs to the MutH family.

The protein resides in the cytoplasm. Sequence-specific endonuclease that cleaves unmethylated GATC sequences. It is involved in DNA mismatch repair. In Actinobacillus pleuropneumoniae serotype 3 (strain JL03), this protein is DNA mismatch repair protein MutH.